Consider the following 562-residue polypeptide: Nucleoprotein (562 aa).

The interval 54–237 is binding site for the cap structure m7GTP; that stretch reads LRKTKRTDGD…ITKDESAINI (184 aa). The Mn(2+) site is built by D381 and E383. E391, C498, H501, and C523 together coordinate Zn(2+). A Mn(2+)-binding site is contributed by D527.

This sequence belongs to the arenaviridae nucleocapsid protein family. Homomultimerizes to form the nucleocapsid. Binds to viral genomic RNA. Interacts with glycoprotein G2. Interacts with protein Z; this interaction probably directs the encapsidated genome to budding sites. Interacts with protein L; this interaction does not interfere with Z-L interaction. Interacts with host IKBKE (via Protein kinase domain); the interaction inhibits IKBKE kinase activity.

It localises to the virion. The protein localises to the host cytoplasm. Functionally, encapsidates the genome, protecting it from nucleases. The encapsidated genomic RNA is termed the nucleocapsid (NC). Serves as template for viral transcription and replication. The increased presence of protein N in host cell does not seem to trigger the switch from transcription to replication as observed in other negative strain RNA viruses. Through the interaction with host IKBKE, strongly inhibits the phosphorylation and nuclear translocation of host IRF3, a protein involved in interferon activation pathway, leading to the inhibition of interferon-beta and IRF3-dependent promoters activation. Also encodes a functional 3'-5' exoribonuclease that degrades preferentially dsRNA substrates and thereby participates in the suppression of interferon induction. This is Nucleoprotein from Homo sapiens (Human).